The primary structure comprises 498 residues: ATP synthase subunit beta, chloroplastic (498 aa).

172–179 (GGAGVGKT) contacts ATP.

It belongs to the ATPase alpha/beta chains family. In terms of assembly, F-type ATPases have 2 components, CF(1) - the catalytic core - and CF(0) - the membrane proton channel. CF(1) has five subunits: alpha(3), beta(3), gamma(1), delta(1), epsilon(1). CF(0) has four main subunits: a(1), b(1), b'(1) and c(9-12).

Its subcellular location is the plastid. The protein localises to the chloroplast thylakoid membrane. The enzyme catalyses ATP + H2O + 4 H(+)(in) = ADP + phosphate + 5 H(+)(out). In terms of biological role, produces ATP from ADP in the presence of a proton gradient across the membrane. The catalytic sites are hosted primarily by the beta subunits. This chain is ATP synthase subunit beta, chloroplastic, found in Balaka seemannii.